The primary structure comprises 153 residues: Large ribosomal subunit protein eL15 (153 aa).

Residue K32 forms a Glycyl lysine isopeptide (Lys-Gly) (interchain with G-Cter in SUMO2) linkage. Phosphoserine is present on residues S46 and S49. Positions T114–G135 are disordered. Positions R118–H131 are enriched in basic residues.

This sequence belongs to the eukaryotic ribosomal protein eL15 family. Component of the large ribosomal subunit. Interacts with IFIT1 (via TPR repeats 1-4).

Its subcellular location is the cytoplasm. In terms of biological role, component of the large ribosomal subunit. The ribosome is a large ribonucleoprotein complex responsible for the synthesis of proteins in the cell. In Sus scrofa (Pig), this protein is Large ribosomal subunit protein eL15 (RPL15).